The sequence spans 495 residues: MFS transporter prlL (495 aa).

Positions 1–24 (MAQSFANEHDPAKRAEERGHVGTI) are disordered. The segment covering 7 to 20 (NEHDPAKRAEERGH) has biased composition (basic and acidic residues). 11 helical membrane-spanning segments follow: residues 102–122 (IALMIFFLAYGLFEVPSNVLL), 130–150 (WIAILMFSWGAISMGLAGAHN), 159–179 (FLLGIFEAGLFPGLVYYLTFW), 189–209 (VAFILASATLAGAFGGAIAYA), 224–244 (WLFIIEGAPSCVSALFVLFFL), 292–312 (LWAHYLIYFGISTPFSSLSLF), 329–349 (LMTVPPYAVAYVVQILVSWSA), 356–376 (GLHSAASATVGACGFLASAVL), 386–406 (GCLIVAAAGAFACIPPLLGWL), 418–438 (LAIALNIGLGGAPGQIAGVWI), and 449–469 (PTGHWVNAGLLFFVAVACVAL).

Belongs to the major facilitator superfamily.

Its subcellular location is the cell membrane. Functionally, efflux pump that might be required for efficient secretion of pyrrolocin or other secondary metabolies produced by the pyrrolocin gene cluster. The protein is MFS transporter prlL of Fungal sp. (strain NRRL 50135).